Consider the following 577-residue polypeptide: ER degradation-enhancing alpha-mannosidase-like protein 2 (577 aa).

A signal peptide spans 1-21 (MPFRLLIPLGLVCVLLPLHHG). 4 N-linked (GlcNAc...) asparagine glycosylation sites follow: Asn-90, Asn-112, Asn-289, and Asn-450. A disordered region spans residues 513–561 (PKRAQRKTVRSGPWEPQSGPATLSSPANQPREKQPAQQRTPLLSCPSQP). Composition is skewed to polar residues over residues 531–540 (GPATLSSPAN) and 547–561 (PAQQ…PSQP).

This sequence belongs to the glycosyl hydrolase 47 family. N-glycosylated.

It is found in the endoplasmic reticulum lumen. Functionally, involved in the endoplasmic reticulum-associated degradation (ERAD) pathway that targets misfolded glycoproteins for degradation in an N-glycan-dependent manner. May initiate ERAD by promoting the first mannose trimming step of ERAD substrates, from Man9GlcNAc2 to Man8GlcNAc2. Seems to recognize and bind to exposed hydrophobic regions in target proteins. The chain is ER degradation-enhancing alpha-mannosidase-like protein 2 from Mus musculus (Mouse).